A 537-amino-acid polypeptide reads, in one-letter code: uncharacterized protein (537 aa).

Disordered stretches follow at residues 1–33 (MEPG…ILAF), 71–98 (SSPP…RKRQ), 197–220 (SHNN…SEEK), and 516–537 (GRQR…EEQN). Residue Ser-72 is modified to Phosphoserine. A compositionally biased stretch (basic and acidic residues) spans 88–98 (SRVDSEARKRQ). Residues 197–214 (SHNNMASSNTQSNTQLSE) are compositionally biased toward polar residues. Residues 516 to 529 (GRQRSSRYKSHVHK) show a composition bias toward basic residues.

This sequence belongs to the NAD kinase family.

This is an uncharacterized protein from Schizosaccharomyces pombe (strain 972 / ATCC 24843) (Fission yeast).